The chain runs to 292 residues: Large ribosomal subunit protein uL4 (292 aa).

Composition is skewed to basic and acidic residues over residues Met1–Ala33 and Lys42–Pro51. Disordered stretches follow at residues Met1–Ser59 and Gly132–Ala158.

The protein belongs to the universal ribosomal protein uL4 family. In terms of assembly, part of the 50S ribosomal subunit.

Its function is as follows. One of the primary rRNA binding proteins, this protein initially binds near the 5'-end of the 23S rRNA. It is important during the early stages of 50S assembly. It makes multiple contacts with different domains of the 23S rRNA in the assembled 50S subunit and ribosome. In terms of biological role, forms part of the polypeptide exit tunnel. This Mycoplasmopsis pulmonis (strain UAB CTIP) (Mycoplasma pulmonis) protein is Large ribosomal subunit protein uL4.